The chain runs to 833 residues: Leucine--tRNA ligase (833 aa).

A 'HIGH' region motif is present at residues Pro41–His52. The short motif at Lys610–Ser614 is the 'KMSKS' region element. Lys613 provides a ligand contact to ATP.

Belongs to the class-I aminoacyl-tRNA synthetase family.

The protein localises to the cytoplasm. The catalysed reaction is tRNA(Leu) + L-leucine + ATP = L-leucyl-tRNA(Leu) + AMP + diphosphate. The polypeptide is Leucine--tRNA ligase (Streptococcus agalactiae serotype Ia (strain ATCC 27591 / A909 / CDC SS700)).